The sequence spans 277 residues: Methylamine utilization protein MauF (277 aa).

The next 7 membrane-spanning stretches (helical) occupy residues 33 to 53 (IAVL…LASA), 59 to 79 (LWAV…WSPC), 111 to 131 (YGLG…IAGF), 132 to 152 (SGFG…YGAH), 179 to 199 (WVIG…YVQT), 205 to 225 (MTLA…VALF), and 257 to 277 (ALAD…LALI).

It is found in the cell membrane. It participates in one-carbon metabolism; methylamine degradation. This chain is Methylamine utilization protein MauF (mauF), found in Paracoccus denitrificans.